We begin with the raw amino-acid sequence, 56 residues long: Alpha-conotoxin Pn1.2 (56 aa).

The first 16 residues, Met-1 to Ser-16, serve as a signal peptide directing secretion. Positions Phe-17–Lys-39 are excised as a propeptide. Intrachain disulfides connect Cys-41–Cys-47 and Cys-42–Cys-55. The interval Ser-43–Pro-45 is ser-Xaa-Pro motif, crucial for potent interaction with nAChR. Position 55 is a cysteine amide (Cys-55).

It belongs to the conotoxin A superfamily. In terms of processing, non-native isomers 'ribbon' (with disulfide connectivity C1-C4; C2-C3) and 'beads' (with disulfide connectivity C1-C2; C3-C4) also inhibit high voltage-activated (HVA) calcium channel currents in rat DRG neurons (20-30% inhibition at 1 uM toxin). As to expression, expressed by the venom duct.

It localises to the secreted. Functionally, alpha-conotoxins act on postsynaptic membranes, they bind to the nicotinic acetylcholine receptors (nAChR) and thus inhibit them. This toxin inhibits human alpha-7/CHRNA7 and alpha-9-alpha-10/CHRNA9/CHRNA10 AChR (complete inhibition at 3 uM of toxin). In addition, this toxin inhibits high voltage-activated (HVA) calcium channel currents in rat DRG neurons (22% inhibition at 1 uM toxin) probably by activating GABA(B) receptors (GABBR1 and/or GABBR2). This chain is Alpha-conotoxin Pn1.2, found in Conus pennaceus (Feathered cone).